Consider the following 227-residue polypeptide: Phosphoribosylformylglycinamidine synthase subunit PurQ (227 aa).

The region spanning 2 to 226 is the Glutamine amidotransferase type-1 domain; the sequence is KFAVIQFPGS…VQAWKEEQVN (225 aa). The active-site Nucleophile is C86. Residues H195 and E197 contribute to the active site.

In terms of assembly, part of the FGAM synthase complex composed of 1 PurL, 1 PurQ and 2 PurS subunits.

The protein resides in the cytoplasm. The enzyme catalyses N(2)-formyl-N(1)-(5-phospho-beta-D-ribosyl)glycinamide + L-glutamine + ATP + H2O = 2-formamido-N(1)-(5-O-phospho-beta-D-ribosyl)acetamidine + L-glutamate + ADP + phosphate + H(+). It catalyses the reaction L-glutamine + H2O = L-glutamate + NH4(+). The protein operates within purine metabolism; IMP biosynthesis via de novo pathway; 5-amino-1-(5-phospho-D-ribosyl)imidazole from N(2)-formyl-N(1)-(5-phospho-D-ribosyl)glycinamide: step 1/2. In terms of biological role, part of the phosphoribosylformylglycinamidine synthase complex involved in the purines biosynthetic pathway. Catalyzes the ATP-dependent conversion of formylglycinamide ribonucleotide (FGAR) and glutamine to yield formylglycinamidine ribonucleotide (FGAM) and glutamate. The FGAM synthase complex is composed of three subunits. PurQ produces an ammonia molecule by converting glutamine to glutamate. PurL transfers the ammonia molecule to FGAR to form FGAM in an ATP-dependent manner. PurS interacts with PurQ and PurL and is thought to assist in the transfer of the ammonia molecule from PurQ to PurL. The protein is Phosphoribosylformylglycinamidine synthase subunit PurQ of Listeria welshimeri serovar 6b (strain ATCC 35897 / DSM 20650 / CCUG 15529 / CIP 8149 / NCTC 11857 / SLCC 5334 / V8).